The chain runs to 403 residues: Renin (403 aa).

Residues 1-22 (MARCRMPRWGLLLVLWGSCTFG) form the signal peptide. Residues 23-65 (LPADTGAFRRIFLKKMPSIRESLKERGVDVAGLGAEWNQFTKR) constitute a propeptide, activation peptide. Asn70 is a glycosylation site (N-linked (GlcNAc...) asparagine). The 316-residue stretch at 85–400 (YYGEIGIGTP…DRHNNRIGFA (316 aa)) folds into the Peptidase A1 domain. Residue Asp103 is part of the active site. A disulfide bridge links Cys116 with Cys123. Residue Asn140 is glycosylated (N-linked (GlcNAc...) asparagine). A disulfide bridge links Cys279 with Cys283. Asp288 is an active-site residue. A disulfide bridge connects residues Cys322 and Cys359.

The protein belongs to the peptidase A1 family. Interacts with ATP6AP2.

It localises to the secreted. It is found in the membrane. It carries out the reaction Cleavage of Leu-|-Xaa bond in angiotensinogen to generate angiotensin I.. With respect to regulation, interaction with ATP6AP2 results in a 5-fold increased efficiency in angiotensinogen processing. Functionally, renin is a highly specific endopeptidase, whose only known function is to generate angiotensin I from angiotensinogen in the plasma, initiating a cascade of reactions that produce an elevation of blood pressure and increased sodium retention by the kidney. In Canis lupus familiaris (Dog), this protein is Renin (REN).